Consider the following 259-residue polypeptide: Probable ABC transporter permease protein RT0041 (259 aa).

Helical transmembrane passes span 20-40 (VGIF…PPLY), 49-69 (LFIG…SGAV), 148-168 (VIAA…IGVM), 195-215 (LIDV…ISII), and 237-257 (AVVN…ELLF).

Belongs to the MlaE permease family.

It is found in the cell inner membrane. Could be part of an ABC transporter complex. This is Probable ABC transporter permease protein RT0041 from Rickettsia typhi (strain ATCC VR-144 / Wilmington).